The sequence spans 484 residues: NADH-quinone oxidoreductase subunit N (484 aa).

14 consecutive transmembrane segments (helical) span residues 11-31, 42-62, 79-98, 113-133, 134-154, 167-187, 211-231, 248-268, 279-299, 313-333, 335-355, 378-398, 408-428, and 457-477; these read SLWI…VLLI, VTYY…FNLI, MASV…MVYS, FVLV…YSLL, TLYL…AIAR, FVLG…IYGI, LIIN…LGAV, VTLF…VRIL, WSDL…VVAL, ISHV…GYGA, AFYM…IILL, FALM…LVGF, VVSA…VISA, and LVLS…DFWM.

This sequence belongs to the complex I subunit 2 family. In terms of assembly, NDH-1 is composed of 14 different subunits. Subunits NuoA, H, J, K, L, M, N constitute the membrane sector of the complex.

The protein localises to the cell inner membrane. The catalysed reaction is a quinone + NADH + 5 H(+)(in) = a quinol + NAD(+) + 4 H(+)(out). NDH-1 shuttles electrons from NADH, via FMN and iron-sulfur (Fe-S) centers, to quinones in the respiratory chain. The immediate electron acceptor for the enzyme in this species is believed to be ubiquinone. Couples the redox reaction to proton translocation (for every two electrons transferred, four hydrogen ions are translocated across the cytoplasmic membrane), and thus conserves the redox energy in a proton gradient. The chain is NADH-quinone oxidoreductase subunit N from Ruthia magnifica subsp. Calyptogena magnifica.